Reading from the N-terminus, the 356-residue chain is 5-formaminoimidazole-4-carboxamide-1-(beta)-D-ribofuranosyl 5'-monophosphate synthetase 1 (356 aa).

Residues H27 and S94 each contribute to the 5-amino-1-(5-phospho-beta-D-ribosyl)imidazole-4-carboxamide site. The ATP-grasp domain occupies 101–333 (TENFAEMAVP…YADLIQEDLS (233 aa)). Residues 145 to 196 (PRDI…TRYY) and E226 contribute to the ATP site. N255 lines the 5-amino-1-(5-phospho-beta-D-ribosyl)imidazole-4-carboxamide pocket. Residues E293 and E306 each contribute to the Mg(2+) site.

Belongs to the phosphohexose mutase family. Mg(2+) is required as a cofactor. Requires Mn(2+) as cofactor.

The enzyme catalyses 5-amino-1-(5-phospho-beta-D-ribosyl)imidazole-4-carboxamide + formate + ATP = 5-formamido-1-(5-phospho-D-ribosyl)imidazole-4-carboxamide + ADP + phosphate. It participates in purine metabolism; IMP biosynthesis via de novo pathway; 5-formamido-1-(5-phospho-D-ribosyl)imidazole-4-carboxamide from 5-amino-1-(5-phospho-D-ribosyl)imidazole-4-carboxamide (formate route): step 1/1. Its function is as follows. Catalyzes the ATP- and formate-dependent formylation of 5-aminoimidazole-4-carboxamide-1-beta-d-ribofuranosyl 5'-monophosphate (AICAR) to 5-formaminoimidazole-4-carboxamide-1-beta-d-ribofuranosyl 5'-monophosphate (FAICAR) in the absence of folates. The sequence is that of 5-formaminoimidazole-4-carboxamide-1-(beta)-D-ribofuranosyl 5'-monophosphate synthetase 1 from Methanosarcina mazei (strain ATCC BAA-159 / DSM 3647 / Goe1 / Go1 / JCM 11833 / OCM 88) (Methanosarcina frisia).